We begin with the raw amino-acid sequence, 423 residues long: Carboxypeptidase S1 (423 aa).

Intrachain disulfides connect Cys-8–Cys-68, Cys-55–Cys-300, Cys-223–Cys-246, and Cys-230–Cys-239. Ser-143 is an active-site residue. Residue Asn-200 is glycosylated (N-linked (GlcNAc...) asparagine). Asp-340 is an active-site residue. Cys-343 is a substrate binding site. His-397 is a catalytic residue. Glu-398 lines the substrate pocket.

This sequence belongs to the peptidase S10 family.

It carries out the reaction Preferential release of a C-terminal arginine or lysine residue.. The polypeptide is Carboxypeptidase S1 (Penicillium janthinellum (Penicillium vitale)).